The sequence spans 578 residues: Probable arginine--tRNA ligase, mitochondrial (578 aa).

The N-terminal 16 residues, 1-16 (MACGFRRSIASQLSRV), are a transit peptide targeting the mitochondrion. L-arginine is bound by residues 133-135 (SPN), His144, Tyr322, Asp326, and Gln350. A 'HIGH' region motif is present at residues 133-144 (SPNVAKKFHVGH). An N6-acetyllysine modification is found at Lys568.

The protein belongs to the class-I aminoacyl-tRNA synthetase family.

Its subcellular location is the mitochondrion membrane. It catalyses the reaction tRNA(Arg) + L-arginine + ATP = L-arginyl-tRNA(Arg) + AMP + diphosphate. Catalyzes the attachment of arginine to tRNA(Arg) in a two-step reaction: arginine is first activated by ATP to form Arg-AMP and then transferred to the acceptor end of tRNA(Arg). The chain is Probable arginine--tRNA ligase, mitochondrial (RARS2) from Bos taurus (Bovine).